The primary structure comprises 4080 residues: Hybrid PKS-NRPS synthetase poxE (4080 aa).

One can recognise a Ketosynthase family 3 (KS3) domain in the interval 8 to 442 (REPIAIVGSG…GTNAHAIIEA (435 aa)). Active-site for beta-ketoacyl synthase activity residues include Cys181, His320, and His362. The interval 554–878 (VFTGQGAQWA…QRGMNDVEAM (325 aa)) is malonyl-CoA:ACP transacylase (MAT) domain. The segment at 944–1078 (HPILGTRCPD…GRLVITYGPV (135 aa)) is N-terminal hotdog fold. Residues 944–1246 (HPILGTRCPD…AVPLEATNAD (303 aa)) enclose the PKS/mFAS DH domain. The segment at 945 to 1243 (PILGTRCPDG…GIHAVPLEAT (299 aa)) is dehydratase (DH) domain. The active-site Proton acceptor; for dehydratase activity is the His976. The interval 1093 to 1246 (MVDVPSERFY…AVPLEATNAD (154 aa)) is C-terminal hotdog fold. The active-site Proton donor; for dehydratase activity is the Asp1152. The interval 1400 to 1585 (HFSDYLASVV…GVDTFTSDAD (186 aa)) is methyltransferase (MT) domain. The interval 2118-2292 (TYWLVGLTGS…AGSVMNIGAI (175 aa)) is ketoreductase (KR)domain. Residues 2399–2478 (TTDEIYEVIK…TIGEIIKFVL (80 aa)) form a peptidyl carrier protein region. Positions 2405-2481 (EVIKECFIVK…EIIKFVLEKL (77 aa)) constitute a Carrier 1 domain. Ser2441 is subject to O-(pantetheine 4'-phosphoryl)serine. The tract at residues 2488-2569 (SLGLSPPTGA…AASPSIHTEE (82 aa)) is disordered. Over residues 2511–2525 (VVVERRNVPRLEKKI) the composition is skewed to basic and acidic residues. Low complexity predominate over residues 2528–2545 (SAGSRTSSSVTGTSKSVS). Positions 2551 to 2565 (DTASSQTSEAASPSI) are enriched in polar residues. Residues 2607–3036 (KEPLSFGQSR…DSKQPGGHVS (430 aa)) form a condensation region. Residues 3069-3478 (DMAKQYPQKL…DGRLRIEGRI (410 aa)) form an adenylation region. The Carrier 2 domain occupies 3593–3673 (AHLNEAQAQM…KMALLIKPQE (81 aa)). The interval 3598 to 3670 (AQAQMVQLWE…TLEKMALLIK (73 aa)) is thiolation. At Ser3633 the chain carries O-(pantetheine 4'-phosphoryl)serine. A reductase (RED) domain region spans residues 3740–3959 (LTGATGFIGQ…DFVPVEQVVR (220 aa)).

This sequence in the C-terminal section; belongs to the NRP synthetase family.

It participates in secondary metabolite biosynthesis. In terms of biological role, hybrid PKS-NRPS synthetase; part of the gene cluster that mediates the biosynthesis of oxaleimides, cytotoxic compounds containing an unusual disubstituted succinimide moiety. The first step of the pathway is provided by the HR-PKS poxF that serves in a new mode of collaborative biosynthesis with the PKS-NRPS poxE, by providing the olefin containing amino acid substrate via the synthesis of an ACP-bound dec-4-enoate. The cytochrome P450 monooxygenase poxM-catalyzed oxidation at the alpha-position creates the enzyme-bound 2-hydroxydec-4-enoyl-ACP thioester, which may be prone to spontaneous hydrolysis to yield 2-hydroxydec-4-enoic acid due to increased electrophilicity of the carbonyl. 2-hydroxydec-4-enoic acid can then be further oxidized by poxM to yield the alpha-ketoacid 2-oxodec-4-enoicacid, which is reductively aminated by the aminotransferase poxL to yield (S,E)-2-aminodec-4-enoic acid. The Hybrid PKS-NRPS synthetase poxE then performs condensation between the octaketide product of its PKS modules and the amino group of (S,E)-2-aminodec-4-enoic acid which is activated and incorporated by the adenylation domain. The resulting aminoacyl product can be cyclized by the Diels-Alderase PoxQ and reductively released by the reductive (R) domain of poxE to yield an aldehyde intermediate. The released aldehyde is then substrate for a Knoevenagel condensation by the hydrolyase poxO followed by an oxidation at the 5-position of the pyrrolidone ring. The presence of the olefin from the amino acid building block allows for migration of the substituted allyl group to occur. This allylic transposition reaction takes place in a conjugate addition, semipinacol-like fashion to yield a succinimide intermediate. Iterative two-electron oxidations of the C7 methyl of the succinimide intermediate to the carboxylic acid can be catalyzed by one of two remaining cytochrome P450 monooxygenasess poxC or poxD to yield oxaleimide A. Subsequent oxidation yields the maleimide scaffold oxaleimide I. Both oxaleimide A and oxaleimide I can undergo oxidative modifications in the decalin ring to yield the series of products oxaleimides B to H. In Penicillium oxalicum, this protein is Hybrid PKS-NRPS synthetase poxE.